A 43-amino-acid polypeptide reads, in one-letter code: Protein PsbN (43 aa).

Residues 5–27 traverse the membrane as a helical segment; the sequence is TLVTISISCLLVSFTGYALYTAF.

It belongs to the PsbN family.

It is found in the plastid. The protein resides in the chloroplast thylakoid membrane. May play a role in photosystem I and II biogenesis. The polypeptide is Protein PsbN (Pinus koraiensis (Korean pine)).